Reading from the N-terminus, the 338-residue chain is Tagatose 1,6-diphosphate aldolase (338 aa).

This sequence belongs to the aldolase LacD family.

It carries out the reaction D-tagatofuranose 1,6-bisphosphate = D-glyceraldehyde 3-phosphate + dihydroxyacetone phosphate. Its pathway is carbohydrate metabolism; D-tagatose 6-phosphate degradation; D-glyceraldehyde 3-phosphate and glycerone phosphate from D-tagatose 6-phosphate: step 2/2. This is Tagatose 1,6-diphosphate aldolase from Listeria monocytogenes serotype 4a (strain HCC23).